Reading from the N-terminus, the 518-residue chain is MEYEKMLYMPAASEMPHSPQLKPHQFQAHTPTDQYSSYADNFDLSLLPQESASIPTTVFQYNAPQIKVECAWDSQPIQQQQQPTAPYTNPSSHQLIPPPAYPHSAYPSPQSSPLQSEFAAYGLGRFGGSYDSLNSPSPSLEAVSIKQELHILPPSPPESNCETPSPRSSCGESIKAEPLDADIESLIDLNSLLQQQSLQSPQNLQDTKPDHQLLRECLEDTSFQKRHNLKPLALESFIGGLAEVRGDFEPVISLALEHAKREADAICAELQISQDPNGWSPAQVHAWLRSTLAQFRLPPVADLELHFCENGAALALLSEEEFVRRLPESGSTLHAQLEIWKMAYADQPAHQQHSQQSASTDHWPASYAMPHLDLDYNEDSEDDDDMEADAQVAPLNGSTTSPPATNASNGGTATVKRPNGGRTGGGGSHIHLWQFLKELLASPQVNGTAIRWIDRSKGIFKIEDSVRVAKLWGRRKNRPAMNYDKLSRSIRQYYKKGIMKKTERSQRLVYQFCHPYSQ.

Disordered regions lie at residues 74–113 (SQPI…QSSP) and 152–172 (LPPS…SCGE). Over residues 84–94 (TAPYTNPSSHQ) the composition is skewed to polar residues. Positions 102–113 (PHSAYPSPQSSP) are enriched in low complexity. The span at 158–171 (ESNCETPSPRSSCG) shows a compositional bias: polar residues. Residues 258–344 (HAKREADAIC…AQLEIWKMAY (87 aa)) form the PNT domain. The disordered stretch occupies residues 393–426 (APLNGSTTSPPATNASNGGTATVKRPNGGRTGGG). A compositionally biased stretch (polar residues) spans 396–412 (NGSTTSPPATNASNGGT). Residues 430 to 513 (IHLWQFLKEL…RSQRLVYQFC (84 aa)) constitute a DNA-binding region (ETS).

Belongs to the ETS family. Transient high expression in pole cells during embryonic stages 8-11.

It is found in the nucleus. Functionally, may have a role in germline development. This is DNA-binding protein D-ETS-4 (Ets98B) from Drosophila melanogaster (Fruit fly).